Consider the following 84-residue polypeptide: Small ribosomal subunit protein bS16 (84 aa).

Belongs to the bacterial ribosomal protein bS16 family.

This chain is Small ribosomal subunit protein bS16, found in Deinococcus radiodurans (strain ATCC 13939 / DSM 20539 / JCM 16871 / CCUG 27074 / LMG 4051 / NBRC 15346 / NCIMB 9279 / VKM B-1422 / R1).